The sequence spans 101 residues: UPF0235 protein Cpha266_2081 (101 aa).

The protein belongs to the UPF0235 family.

This is UPF0235 protein Cpha266_2081 from Chlorobium phaeobacteroides (strain DSM 266 / SMG 266 / 2430).